The following is a 98-amino-acid chain: Small ribosomal subunit protein uS17 (98 aa).

Belongs to the universal ribosomal protein uS17 family. In terms of assembly, part of the 30S ribosomal subunit.

Its function is as follows. One of the primary rRNA binding proteins, it binds specifically to the 5'-end of 16S ribosomal RNA. In Mesomycoplasma hyopneumoniae (strain 232) (Mycoplasma hyopneumoniae), this protein is Small ribosomal subunit protein uS17.